The chain runs to 400 residues: Enoyl-[acyl-carrier-protein] reductase [NADH] (400 aa).

NAD(+) is bound by residues 48-53 (GASTGY), 74-75 (FE), 111-112 (DA), and 139-140 (LA). Tyr-225 is a binding site for substrate. The active-site Proton donor is Tyr-235. NAD(+)-binding positions include Lys-244 and 273–275 (VVT).

Belongs to the TER reductase family. In terms of assembly, monomer.

It carries out the reaction a 2,3-saturated acyl-[ACP] + NAD(+) = a (2E)-enoyl-[ACP] + NADH + H(+). Its pathway is lipid metabolism; fatty acid biosynthesis. Functionally, involved in the final reduction of the elongation cycle of fatty acid synthesis (FAS II). Catalyzes the reduction of a carbon-carbon double bond in an enoyl moiety that is covalently linked to an acyl carrier protein (ACP). The chain is Enoyl-[acyl-carrier-protein] reductase [NADH] from Burkholderia ambifaria (strain ATCC BAA-244 / DSM 16087 / CCUG 44356 / LMG 19182 / AMMD) (Burkholderia cepacia (strain AMMD)).